The primary structure comprises 696 residues: DNA-directed RNA polymerase subunit beta' (696 aa).

Residues Cys-70, Cys-72, Cys-85, and Cys-88 each coordinate Zn(2+). The Mg(2+) site is built by Asp-540, Asp-542, and Asp-544.

This sequence belongs to the RNA polymerase beta' chain family. RpoC1 subfamily. As to quaternary structure, in plastids the minimal PEP RNA polymerase catalytic core is composed of four subunits: alpha, beta, beta', and beta''. When a (nuclear-encoded) sigma factor is associated with the core the holoenzyme is formed, which can initiate transcription. Requires Mg(2+) as cofactor. Zn(2+) serves as cofactor.

It is found in the plastid. The protein localises to the chloroplast. The enzyme catalyses RNA(n) + a ribonucleoside 5'-triphosphate = RNA(n+1) + diphosphate. In terms of biological role, DNA-dependent RNA polymerase catalyzes the transcription of DNA into RNA using the four ribonucleoside triphosphates as substrates. The protein is DNA-directed RNA polymerase subunit beta' of Phaeodactylum tricornutum (strain CCAP 1055/1).